Here is a 523-residue protein sequence, read N- to C-terminus: Heparanase (523 aa).

The signal sequence occupies residues 1 to 18 (MLVLLLLVLLLAVPPRRT). Heparan sulfate group is bound by residues 42–44 (DAS), Thr77, and 137–141 (KKHKN). 2 N-linked (GlcNAc...) asparagine glycosylation sites follow: Asn141 and Asn196. The active-site Proton donor is the Glu204. Residues 250 to 260 (QPRKHTQHLLR), His276, and Arg283 contribute to the heparan sulfate group site. A required for heterodimerization with the heparanase 8 kDa subunit region spans residues 268–397 (KAIDSVTWHH…LLYKRLVGTR (130 aa)). Residue Glu323 is the Nucleophile of the active site. Heparan sulfate group-binding positions include 328-330 (YGG) and 369-371 (GSY). Cys417 and Cys522 are oxidised to a cystine. 2 N-linked (GlcNAc...) asparagine glycosylation sites follow: Asn436 and Asn439. The tract at residues 507 to 523 (FSYGFYVIRNAKAIACI) is required for transferring proheparanase to the Golgi apparatus, secretion and subsequent enzyme activity and for enhancement of PKB/AKT1 phosphorylation.

This sequence belongs to the glycosyl hydrolase 79 family. Heterodimer; the active enzyme is a heterodimer of the 60 kDa and 45 kDa proteolytic products. In terms of processing, N-glycosylated. Post-translationally, proteolytically cleaved to produce a 60 kDa and a 45 kDa product.

Its subcellular location is the secreted. The enzyme catalyses endohydrolysis of (1-&gt;4)-beta-D-glycosidic bonds of heparan sulfate chains in heparan sulfate proteoglycan.. Endoglycosidase that cleaves heparan sulfate proteoglycans (HSPGs) into heparan sulfate side chains and core proteoglycans. Participates in extracellular matrix (ECM) degradation and remodeling. Selectively cleaves the linkage between a glucuronic acid unit and an N-sulfo glucosamine unit carrying either a 3-O-sulfo or a 6-O-sulfo group. Can also cleave the linkage between a glucuronic acid unit and an N-sulfo glucosamine unit carrying a 2-O-sulfo group, but not linkages between a glucuronic acid unit and a 2-O-sulfated iduronic acid moiety. Increases cell adhesion to the extracellular matrix (ECM), independent of its enzymatic activity. The protein is Heparanase (HPSE) of Gallus gallus (Chicken).